The following is a 241-amino-acid chain: Glutathione S-transferase omega-1 (241 aa).

The residue at position 2 (Ser2) is an N-acetylserine. The GST N-terminal domain occupies 22–101 (GSIRIYSMRF…YLDEAYPGKK (80 aa)). Cys32 (nucleophile) is an active-site residue. The residue at position 57 (Lys57) is an N6-acetyllysine. Glutathione-binding positions include Lys59, Val72, and 85–86 (ES). Residues 106 to 230 (DPYEKACQKM…DWQGFLELYL (125 aa)) enclose the GST C-terminal domain. Ser129 is modified (phosphoserine). An N6-acetyllysine mark is found at Lys143, Lys148, and Lys152.

The protein belongs to the GST superfamily. Omega family. In terms of assembly, homodimer. As to expression, ubiquitous. Highest expression in liver, pancreas, skeletal muscle, spleen, thymus, colon, blood leukocyte and heart. Lowest expression in brain, placenta and lung.

It is found in the cytoplasm. Its subcellular location is the cytosol. It carries out the reaction RX + glutathione = an S-substituted glutathione + a halide anion + H(+). It catalyses the reaction L-dehydroascorbate + 2 glutathione = glutathione disulfide + L-ascorbate. The enzyme catalyses methylarsonate + 2 glutathione + H(+) = methylarsonous acid + glutathione disulfide + H2O. Monomethylarsonic acid reductase activity is competitively inhibited by 1-chloro 2,4-dinitrobenzene (CDNB) and by deoxycholate. Exhibits glutathione-dependent thiol transferase and dehydroascorbate reductase activities. Has S-(phenacyl)glutathione reductase activity. Also has glutathione S-transferase activity. Participates in the biotransformation of inorganic arsenic and reduces monomethylarsonic acid (MMA) and dimethylarsonic acid. The sequence is that of Glutathione S-transferase omega-1 (GSTO1) from Homo sapiens (Human).